The sequence spans 397 residues: Ribosomal RNA large subunit methyltransferase I (397 aa).

Positions 2–81 (SAQVILQPSR…ESIDNGFFLR (80 aa)) constitute a PUA domain.

The protein belongs to the methyltransferase superfamily. RlmI family.

Its subcellular location is the cytoplasm. It carries out the reaction cytidine(1962) in 23S rRNA + S-adenosyl-L-methionine = 5-methylcytidine(1962) in 23S rRNA + S-adenosyl-L-homocysteine + H(+). Specifically methylates the cytosine at position 1962 (m5C1962) of 23S rRNA. The polypeptide is Ribosomal RNA large subunit methyltransferase I (Alteromonas mediterranea (strain DSM 17117 / CIP 110805 / LMG 28347 / Deep ecotype)).